The primary structure comprises 1895 residues: 1,3-beta-glucan synthase component GSC2 (1895 aa).

Polar residues-rich tracts occupy residues 1-16 and 25-34; these read MSYNDPNLNGQYYSNG and PTYQVTQDQS. 2 disordered regions span residues 1-143 and 269-292; these read MSYN…PYGN and ARKAKKKNKKAMQEASPEDTEETL. Topologically, residues 1-473 are extracellular; that stretch reads MSYNDPNLNG…WLHLVTNFNR (473 aa). Positions 65–78 are enriched in low complexity; the sequence is QFPQGQDPSQDQGP. 2 stretches are compositionally biased toward polar residues: residues 79–107 and 115–141; these read YNNDASYYNQPPNMMNPSSQDGENFSDFS and TYPNDQYTPSQMSYPDQDGSSGASTPY. Over residues 269 to 278 the composition is skewed to basic residues; it reads ARKAKKKNKK. A Glycyl lysine isopeptide (Lys-Gly) (interchain with G-Cter in ubiquitin) cross-link involves residue K278. 2 positions are modified to phosphothreonine: T288 and T291. A Glycyl lysine isopeptide (Lys-Gly) (interchain with G-Cter in ubiquitin) cross-link involves residue K405. The helical transmembrane segment at 474–494 threads the bilayer; the sequence is IWIMHISVYWMYCAYNAPTFY. Residues 495-511 lie on the Cytoplasmic side of the membrane; sequence THNYQQLVDNQPLAAYK. The chain crosses the membrane as a helical span at residues 512 to 532; that stretch reads WATAALGGTVASLIQVAATLC. Residues 533-550 are Extracellular-facing; that stretch reads EWSFVPRKWAGAQHLSRR. The helical transmembrane segment at 551-571 threads the bilayer; that stretch reads FWFLCVIMGINLGPVIFVFAY. Residues 572-582 lie on the Cytoplasmic side of the membrane; sequence DKDTVYSTAAH. Residues 583-603 form a helical membrane-spanning segment; it reads VVGAVMFFVAVATLVFFSVMP. Residues 604–1579 are Extracellular-facing; the sequence is LGGLFTSYMK…DASRAHRTNL (976 aa). Glycyl lysine isopeptide (Lys-Gly) (interchain with G-Cter in ubiquitin) cross-links involve residues K929, K934, K1558, and K1566. Residues 1580 to 1600 form a helical membrane-spanning segment; it reads IMAEIIPCAIYAAGCFIAFTF. At 1601–1620 the chain is on the cytoplasmic side; that stretch reads INAQTGVKTTDEDRVNSTLR. The helical transmembrane segment at 1621-1641 threads the bilayer; the sequence is IIICTLAPIVIDIGVLFFCMG. The Extracellular portion of the chain corresponds to 1642–1758; sequence LSCCSGPLLG…LTAKVIELSE (117 aa). A helical transmembrane segment spans residues 1759-1779; that stretch reads FAADFVLGHVILIFQLPVICI. The Cytoplasmic portion of the chain corresponds to 1780–1821; that stretch reads PKIDKFHSIMLFWLKPSRQIRPPIYSLKQARLRKRMVRRYCS. The helical transmembrane segment at 1822–1842 threads the bilayer; sequence LYFLVLIIFAGCIVGPAVASA. The Extracellular portion of the chain corresponds to 1843–1895; that stretch reads HVPKDLGSGLTGTFHNLVQPRNVSNNDTGSQMSTYKSHYYTHTPSLKTWSTIK.

The protein belongs to the glycosyltransferase 48 family. In terms of assembly, component of the 1,3-beta-glucan synthase (GS) complex, composed of two alternate catalytic subunits FKS1 or GSC2, and a regulatory subunit RHO1. Interacts with SMK1.

It localises to the membrane. The enzyme catalyses [(1-&gt;3)-beta-D-glucosyl](n) + UDP-alpha-D-glucose = [(1-&gt;3)-beta-D-glucosyl](n+1) + UDP + H(+). Alternate catalytic subunit of the 1,3-beta-glucan synthase (GS) complex. Synthesizes 1,3-beta-glucan, a major structural component of the yeast cell wall. Required for spore wall assembly. Negative regulation of activity by SMK1 is important for spore wall deposition. Activity is positively regulated by RHO1. This chain is 1,3-beta-glucan synthase component GSC2, found in Saccharomyces cerevisiae (strain ATCC 204508 / S288c) (Baker's yeast).